Consider the following 209-residue polypeptide: Holliday junction branch migration complex subunit RuvA (209 aa).

Residues 1 to 64 (MIGKLKGLVD…EDSIKLYGFA (64 aa)) form a domain I region. The interval 65 to 143 (SETEREWFRL…ALGASLHTLA (79 aa)) is domain II. Positions 144–154 (GAGSEGAGVEA) are flexible linker. Residues 155–209 (PASGAVSDAISVLVNLGFGRSQAAVAVAASSKALGSGAGAGDLAKRALQELAQSG) form a domain III region.

The protein belongs to the RuvA family. Homotetramer. Forms an RuvA(8)-RuvB(12)-Holliday junction (HJ) complex. HJ DNA is sandwiched between 2 RuvA tetramers; dsDNA enters through RuvA and exits via RuvB. An RuvB hexamer assembles on each DNA strand where it exits the tetramer. Each RuvB hexamer is contacted by two RuvA subunits (via domain III) on 2 adjacent RuvB subunits; this complex drives branch migration. In the full resolvosome a probable DNA-RuvA(4)-RuvB(12)-RuvC(2) complex forms which resolves the HJ.

It is found in the cytoplasm. Its function is as follows. The RuvA-RuvB-RuvC complex processes Holliday junction (HJ) DNA during genetic recombination and DNA repair, while the RuvA-RuvB complex plays an important role in the rescue of blocked DNA replication forks via replication fork reversal (RFR). RuvA specifically binds to HJ cruciform DNA, conferring on it an open structure. The RuvB hexamer acts as an ATP-dependent pump, pulling dsDNA into and through the RuvAB complex. HJ branch migration allows RuvC to scan DNA until it finds its consensus sequence, where it cleaves and resolves the cruciform DNA. This chain is Holliday junction branch migration complex subunit RuvA, found in Methylocella silvestris (strain DSM 15510 / CIP 108128 / LMG 27833 / NCIMB 13906 / BL2).